Here is a 1072-residue protein sequence, read N- to C-terminus: MAAYVSDELKAAALVEDDIEPEEQVADGEPSAKYMCPEKELSKACPSYQNSPAAEFSSHEMDSESHISETSDRMADFESSSIKNEEETKEVQVPLEDTTVSDSLEQMKAVYNNFLSNSYWSNLNLNLHQPSSENNGGGSSSSSSSSSSSCGSGSFDWHQSAMAKTLQQVSQNRMLPEPSLFSTVQLYRQSSKLYGSIFTGASKFRCKDCSAAYDTLVELTVHMNETGHYRDDNHETDNNNPKRWSKPRKRSLLEMEGKEDAQKVLKCMYCGHSFESLQDLSVHMIKTKHYQKVPLKEPVTPVAAKIIPAARKKPSLELELPSSPDSTGGTPKATLSDASDALQKNSNPYITPNNRYGHQNGASYAWHFEARKSQILKCMECGSSHDTLQELTAHMMVTGHFIKVTNSAMKKGKPIMETPVTPTITTLLDEKVQSVPLAATTFTSPSNTPASVSPKLTVEIKKEVDKEKAVLDEKPKEKEKASEEEEKYDISSKYHYLTENDLEESPKGGLDILKSLENTVTSAINKAQNGTPSWGGYPSIHAAYQLPNMMKLSLGSSGKSTPLKPMFGNSEIVSPTKTQTLVSPPSSQTSPMPKTNFHAMEELVKKVTEKVAKVEEKMKEPDSKLSPPKRATPSPCSSEQSEPIKMEASSGSGFKSQENSPSPPRDVCKEASPSAEPVENGKELVKPLSGGSLSGSTAIITDHPPEQPFVNPLSALQSVMNIHLGKAAKPSLPALDPMSMLFKMSNSLAEKAAVATPPPLQAKKAEHLDRYFYHVNNDQPIDLTKGKSDKGCSLGSGLLSPTSTSPATSSSTVTTAKTSAVVSFMSNSPLRENALSDISDMLKNLTESHTSKSSTPSSISEKSDIDGATLEEAEESTPAQKRKGRQSNWNPQHLLILQAQFAASLRQTSEGKYIMSDLSPQERMHISRFTGLSMTTISHWLANVKYQLRRTGGTKFLKNLDTGHPVFFCNDCASQIRTPSTYISHLESHLGFRLRDLSKLSTEQINNQIAQTKSPSEKMVTSSPEEDLGTTYQCKLCNRTFASKHAVKLHLSKTHGKSPEDHLLFVSELEKQ.

Disordered regions lie at residues 44–71 (ACPS…SETS), 130–153 (PSSE…CGSG), and 228–247 (HYRD…WSKP). The segment covering 57–71 (SSHEMDSESHISETS) has biased composition (basic and acidic residues). C2H2-type zinc fingers lie at residues 204-228 (FRCK…ETGH) and 265-289 (LKCM…KTKH). Over residues 228 to 237 (HYRDDNHETD) the composition is skewed to basic and acidic residues. A disordered region spans residues 315–336 (SLELELPSSPDSTGGTPKATLS). The segment at 376 to 400 (LKCMECGSSHDTLQELTAHMMVTGH) adopts a C2H2-type 3; atypical zinc-finger fold. The span at 469–481 (AVLDEKPKEKEKA) shows a compositional bias: basic and acidic residues. 5 disordered regions span residues 469–489 (AVLD…EKYD), 569–594 (NSEI…PMPK), 616–690 (EKMK…PLSG), 784–815 (TKGK…TVTT), and 846–888 (TESH…RQSN). 2 stretches are compositionally biased toward polar residues: residues 571 to 593 (EIVS…SPMP) and 649 to 660 (SSGSGFKSQENS). Ser672 bears the Phosphoserine mark. 2 stretches are compositionally biased toward low complexity: residues 791–815 (GCSL…TVTT) and 847–860 (ESHT…SSIS). The homeobox; atypical DNA-binding region spans 882–952 (RKGRQSNWNP…NVKYQLRRTG (71 aa)). 2 consecutive C2H2-type zinc fingers follow at residues 967 to 989 (FFCN…LESH) and 1032 to 1055 (YQCK…SKTH).

The protein belongs to the teashirt C2H2-type zinc-finger protein family. As to quaternary structure, interacts (via N-terminus) with HDAC1 and HDAC2; the interaction is direct. Found in a trimeric complex with APBB1 and HDAC1; the interaction between HDAC1 and APBB1 is mediated by TSHZ3. Interacts (via homeobox domain) with APBB1 (via PID domain 1). In terms of tissue distribution, expressed in cortical neurons.

The protein resides in the nucleus. It localises to the cell projection. The protein localises to the growth cone. Functionally, transcriptional regulator involved in developmental processes. Functions in association with APBB1, SET and HDAC factors as a transcriptional repressor, that inhibits the expression of CASP4. TSHZ3-mediated transcription repression involves the recruitment of histone deacetylases HDAC1 and HDAC2. Associates with chromatin in a region surrounding the CASP4 transcriptional start site(s). Regulates the development of neurons involved in both respiratory rhythm and airflow control. Promotes maintenance of nucleus ambiguus (nA) motoneurons, which govern upper airway function, and establishes a respiratory rhythm generator (RRG) activity compatible with survival at birth. Involved in the differentiation of the proximal uretic smooth muscle cells during developmental processes. Involved in the up-regulation of myocardin, that directs the expression of smooth muscle cells in the proximal ureter. Involved in the modulation of glutamatergic synaptic transmission and long-term synaptic potentiation. The protein is Teashirt homolog 3 (Tshz3) of Rattus norvegicus (Rat).